Here is a 125-residue protein sequence, read N- to C-terminus: Putative superoxide reductase (125 aa).

Residues glutamate 12, histidine 14, histidine 40, histidine 46, cysteine 110, and histidine 113 each coordinate Fe cation.

It belongs to the desulfoferrodoxin family. Requires Fe cation as cofactor.

The catalysed reaction is reduced [rubredoxin] + superoxide + 2 H(+) = oxidized [rubredoxin] + H2O2. Functionally, uses electrons from reduced NADP, by way of rubredoxin and an oxidoreductase, to catalyze the reduction of superoxide to hydrogen peroxide. In Archaeoglobus fulgidus (strain ATCC 49558 / DSM 4304 / JCM 9628 / NBRC 100126 / VC-16), this protein is Putative superoxide reductase.